The following is a 66-amino-acid chain: Large ribosomal subunit protein bL35 (66 aa).

This sequence belongs to the bacterial ribosomal protein bL35 family.

The sequence is that of Large ribosomal subunit protein bL35 from Ruegeria pomeroyi (strain ATCC 700808 / DSM 15171 / DSS-3) (Silicibacter pomeroyi).